Consider the following 1177-residue polypeptide: Putative ATP-dependent RNA helicase TDRD12 (1177 aa).

The region spanning Thr-56–Leu-118 is the Tudor 1 domain. The 189-residue stretch at Trp-447–Val-635 folds into the Helicase ATP-binding domain. Ser-460 to Leu-467 lines the ATP pocket. A DEAH box motif is present at residues Asp-574–Glu-577. Positions Ile-900–Phe-999 constitute a Tudor 2 domain. The segment at Glu-1098–Arg-1177 is disordered. A compositionally biased stretch (polar residues) spans Ser-1100–Gln-1115.

In terms of assembly, component of a mRNP complex containing PIWIL2, TDRD1 and piRNAs. Component of the PET complex, at least composed of EXD1, PIWIL2, TDRD12 and piRNAs.

The enzyme catalyses ATP + H2O = ADP + phosphate + H(+). Functionally, probable ATP-binding RNA helicase required during spermatogenesis to repress transposable elements and preventing their mobilization, which is essential for the germline integrity. Acts via the piRNA metabolic process, which mediates the repression of transposable elements during meiosis by forming complexes composed of piRNAs and Piwi proteins and governs the methylation and subsequent repression of transposons. Involved in the secondary piRNAs metabolic process. Acts via the PET complex, a multiprotein complex required during the secondary piRNAs metabolic process for the PIWIL2 slicing-triggered loading of PIWIL4 piRNAs. The chain is Putative ATP-dependent RNA helicase TDRD12 (TDRD12) from Homo sapiens (Human).